The chain runs to 115 residues: Ribonuclease P protein component (115 aa).

It belongs to the RnpA family. Consists of a catalytic RNA component (M1 or rnpB) and a protein subunit.

The enzyme catalyses Endonucleolytic cleavage of RNA, removing 5'-extranucleotides from tRNA precursor.. Functionally, RNaseP catalyzes the removal of the 5'-leader sequence from pre-tRNA to produce the mature 5'-terminus. It can also cleave other RNA substrates such as 4.5S RNA. The protein component plays an auxiliary but essential role in vivo by binding to the 5'-leader sequence and broadening the substrate specificity of the ribozyme. The chain is Ribonuclease P protein component from Bacillus cereus (strain Q1).